Consider the following 683-residue polypeptide: Cytochrome P450 monooxygenase htyF (683 aa).

The chain crosses the membrane as a helical span at residues 8–28; sequence PALLAASVVLAVSLVSYVIQL. Residue Asn29 is glycosylated (N-linked (GlcNAc...) asparagine). A heme-binding site is contributed by Cys481. An N-linked (GlcNAc...) asparagine glycan is attached at Asn581. Residues 588 to 608 traverse the membrane as a helical segment; the sequence is LYVFVVLVACVAALFIGIGIY.

It belongs to the cytochrome P450 family. It depends on heme as a cofactor.

The protein resides in the membrane. It functions in the pathway antifungal biosynthesis. Functionally, cytochrome P450 monooxygenase; part of the gene cluster that mediates the de novo generation of L-homotyrosine from acetyl-CoA and 4-hydroxyphenyl-pyruvate. L-homotyrosine is a building block of echinocandin B, a fungal lipidated cyclic hexapeptide that acts as an antifungal agent. L-homotyrosine 4-hydroxyphenyl-pyruvate first undergoes an aldol-type condensation by htyA with the C-2 of acetyl-CoA followed by the release of CoA to form 2-(4-hydroxybenzyl)-malate. This is followed by isomerization of 2-(4-hydroxy-benzyl)-malate to 3-(4-hydroxybenzyl)-malate by htyD. Thereafter, 3-(4-hydroxybenzyl)-malate undergoes decarboxylation and oxidation to form 2-oxo-4-(4-hydroxybenzyl)butanoic acid, coupled to reduction of NAD(+) to NADH by htyC. The product then undergoes transamination catalyzed by htyB to form L-homotyrosine. In Aspergillus rugulosus (Emericella rugulosa), this protein is Cytochrome P450 monooxygenase htyF.